The following is a 203-amino-acid chain: Mpv17-like protein (203 aa).

Residues 1-12 (MRILIQFTKRHP) are Cytoplasmic-facing. The chain crosses the membrane as a helical span at residues 13–30 (WLTNVTIYGSLFASADIV). The Lumenal portion of the chain corresponds to 31–49 (QQKLSKSPTEPIDFKQTAK). A helical membrane pass occupies residues 50–69 (VGLVGFCFHANFNFFWLRFI). Over 70 to 89 (ERTFPGSAPLNVIRKVACDQ) the chain is Cytoplasmic. The chain crosses the membrane as a helical span at residues 90–107 (LMAAPITISAFYTGLSLL). At 108 to 143 (DGERDVFKNLKEKFWPTYKTGVMCWTVFQTINFSVI) the chain is on the lumenal side. The chain crosses the membrane as a helical span at residues 144–166 (PPFVRTAYIGVCAFLWTTFLCYI). Residues 167–203 (RNRDINEVTTRLLHAVPNIRGKMAFPQDQDDNKPADK) lie on the Cytoplasmic side of the membrane.

The protein belongs to the peroxisomal membrane protein PXMP2/4 family.

The protein resides in the peroxisome membrane. Participates in reactive oxygen species metabolism by up- or down-regulation of the genes of antioxidant enzymes. Protective against the mitochondrial apoptotic cascade. The polypeptide is Mpv17-like protein (mpv17l) (Xenopus laevis (African clawed frog)).